Consider the following 233-residue polypeptide: Partner of Y14 and mago (233 aa).

A disordered region spans residues 1–153 (MTTYSTDSQG…SNNSDSTVDE (153 aa)). Residues 62-97 (EVVQKAKEKRERERLRQAREEQQRKEQQNKKQQAGA) are a coiled coil. Basic and acidic residues predominate over residues 65–90 (QKAKEKRERERLRQAREEQQRKEQQN). A compositionally biased stretch (low complexity) spans 122 to 142 (KQPQQHTKSSQQKSTTAAAAA). Residues 167 to 199 (ADAQQLEVAKKLRKLRKKIREIEAIETKLRSTD) are a coiled coil.

The protein belongs to the pym family. In terms of assembly, interacts (via N-terminus) with mago and tsu/Y14; the interaction is direct.

The protein resides in the cytoplasm. The protein localises to the nucleus. Regulator of the exon junction complex (EJC), a multiprotein complex that associates immediately upstream of the exon-exon junction on mRNAs and serves as a positional landmarks for the intron exon structure of genes and directs post-transcriptional processes in the cytoplasm such as mRNA export, nonsense-mediated mRNA decay (NMD) or translation. In Anopheles gambiae (African malaria mosquito), this protein is Partner of Y14 and mago.